A 139-amino-acid chain; its full sequence is ATP synthase epsilon chain (139 aa).

This sequence belongs to the ATPase epsilon chain family. As to quaternary structure, F-type ATPases have 2 components, CF(1) - the catalytic core - and CF(0) - the membrane proton channel. CF(1) has five subunits: alpha(3), beta(3), gamma(1), delta(1), epsilon(1). CF(0) has three main subunits: a, b and c.

The protein localises to the cell inner membrane. In terms of biological role, produces ATP from ADP in the presence of a proton gradient across the membrane. The polypeptide is ATP synthase epsilon chain (Nitrosospira multiformis (strain ATCC 25196 / NCIMB 11849 / C 71)).